The chain runs to 218 residues: MSQTAMSETYDFLFKFLVIGNAGTGKSCLLHQFIEKKFKDDSNHTIGVEFGSKIINVGGKYVKLQIWDTAGQERFRSVTRSYYRGAAGALLVYDITSRETYNALTNWLTDARMLASQNIVIILCGNKKDLDADREVTFLEASRFAQENELMFLETSALTGENVEEAFVQCARKILNKIESGELDPERMGSGIQYGDAALRQLRSPRRAQAPNAQECGC.

The GDP site is built by Gly23, Thr24, Gly25, Lys26, Ser27, and Cys28. GTP contacts are provided by Gly23, Thr24, Gly25, Lys26, Ser27, Cys28, Ser42, His44, and Thr45. Ser27 is a binding site for Mg(2+). A Switch 1 motif is present at residues 44-49; the sequence is HTIGVE. Residues Thr45 and Asp68 each contribute to the Mg(2+) site. A Switch 2 motif is present at residues 70 to 79; that stretch reads AGQERFRSVT. Gly71 lines the GTP pocket. 5-glutamyl serotonin is present on Gln72. GDP is bound by residues Asn126, Lys127, Asp129, Ala157, and Leu158. GTP is bound by residues Asn126, Lys127, Asp129, Ala157, and Leu158. The residue at position 190 (Ser190) is a Phosphoserine. The residue at position 204 (Ser204) is a Phosphoserine; by CDK1. Residues Cys216 and Cys218 are each lipidated (S-geranylgeranyl cysteine). Cys218 carries the cysteine methyl ester modification.

The protein belongs to the small GTPase superfamily. Rab family. As to quaternary structure, interacts with SGSM1, SGSM2 and SGSM3. Interacts with RAB11FIP1, RABEP1, ZFYVE20 and RUFY1. Interacts (membrane-bound form) with NDRG1; the interaction involves NDRG1 in vesicular recycling of E-cadherin. Interacts (in GTP-bound form) with GRIPAP1 (via N-terminus). Interacts with RABEP1 and RBSN. Does not interact with HPS4. Interacts with RABEP2; this interaction may mediate VEGFR2 cell surface expression. Requires Mg(2+) as cofactor. Phosphorylated by CDK1 kinase during mitosis. Post-translationally, serotonylation of Gln-72 by TGM2 during activation and aggregation of platelets leads to constitutive activation of GTPase activity.

The protein localises to the membrane. The protein resides in the cytoplasm. Its subcellular location is the early endosome membrane. It is found in the recycling endosome membrane. The catalysed reaction is GTP + H2O = GDP + phosphate + H(+). With respect to regulation, regulated by guanine nucleotide exchange factors (GEFs) which promote the exchange of bound GDP for free GTP. Regulated by GTPase activating proteins (GAPs) which increase the GTP hydrolysis activity. Inhibited by GDP dissociation inhibitors (GDIs). Functionally, the small GTPases Rab are key regulators of intracellular membrane trafficking, from the formation of transport vesicles to their fusion with membranes. Rabs cycle between an inactive GDP-bound form and an active GTP-bound form that is able to recruit to membranes different sets of downstream effectors directly responsible for vesicle formation, movement, tethering and fusion. RAB4A is involved in protein transport. Also plays a role in vesicular traffic. Mediates VEGFR2 endosomal trafficking to enhance VEGFR2 signaling. Acts as a regulator of platelet alpha-granule release during activation and aggregation of platelets. The protein is Ras-related protein Rab-4A of Homo sapiens (Human).